A 610-amino-acid chain; its full sequence is Phosphoenolpyruvate carboxykinase [GTP] (610 aa).

Substrate is bound by residues Arg82 and 221-223 (YGG). Residues Lys230 and His250 each contribute to the Mn(2+) site. Ser272 contributes to the substrate binding site. 273–278 (ACGKTN) contributes to the GTP binding site. Residue Cys274 is part of the active site. Asp297 lines the Mn(2+) pocket. 387–389 (NSR) contacts substrate. Residues Arg389, Arg420, and 515–518 (FGDN) each bind GTP.

This sequence belongs to the phosphoenolpyruvate carboxykinase [GTP] family. Monomer. Requires Mn(2+) as cofactor.

It localises to the cytoplasm. The catalysed reaction is oxaloacetate + GTP = phosphoenolpyruvate + GDP + CO2. It functions in the pathway carbohydrate biosynthesis; gluconeogenesis. Functionally, involved in the gluconeogenesis. Catalyzes the conversion of oxaloacetate (OAA) to phosphoenolpyruvate (PEP), the rate-limiting step in the metabolic pathway that produces glucose from lactate and other precursors derived from the citric acid cycle. This Corynebacterium glutamicum (strain ATCC 13032 / DSM 20300 / JCM 1318 / BCRC 11384 / CCUG 27702 / LMG 3730 / NBRC 12168 / NCIMB 10025 / NRRL B-2784 / 534) protein is Phosphoenolpyruvate carboxykinase [GTP].